We begin with the raw amino-acid sequence, 245 residues long: UPF0246 protein LBUL_1917 (245 aa).

This sequence belongs to the UPF0246 family.

This is UPF0246 protein LBUL_1917 from Lactobacillus delbrueckii subsp. bulgaricus (strain ATCC BAA-365 / Lb-18).